Reading from the N-terminus, the 174-residue chain is Phytochrome-interacting ankyrin-repeat protein 2 (174 aa).

Positions 1–13 (MLQEPSAAFSLRR) are enriched in low complexity. The disordered stretch occupies residues 1 to 29 (MLQEPSAAFSLRRNSFRRRSPRSNVDDRG). At Ser15 the chain carries Phosphoserine. ANK repeat units follow at residues 28 to 57 (RGWNPLHIKARKGDLKSVKQLLDQGMDVNA), 65 to 94 (KGVSALHLAAEGGHIEVMDLLLERGANIDA), and 100 to 129 (CGWTPLHAAAKERKREAVKFLVENGAFLAD).

In terms of assembly, interacts with phytochrome A (PHYA), both in Pr and Pfr forms. Binds to PIF3, a repressor of photomorphogenesis in response to phytochrome-mediated light signaling; this interaction may trigger the repression of PHYA-mediated PIF3 phosphorylation. Interacts with SIGE/SIG5 in mitochondrion. Interacts with RPS9M (via C terminus). In terms of processing, phosphorylated by PHYA. As to expression, mostly expressed in flowers, cotyledons, leaves and siliques, and, to a lower extent, in roots and stems. Also detected at low levels in seedlings grown in continuous dark or light conditions. Expressed in male and female gametophytes.

The protein resides in the cytoplasm. The protein localises to the nucleus. Its subcellular location is the mitochondrion. In terms of biological role, promotes anthocyanin accumulation through interaction with PHYA, especially in response to far-red light, high light and sucrose treatment, probably by triggering A3G2XYLT/UF3GT expression. Required for gametophytes development as well as male-female gamete recognition during fertilization, possibly by regulating mitochondrial gene expression. Represses PHYA-mediated PIF3 phosphorylation. The sequence is that of Phytochrome-interacting ankyrin-repeat protein 2 from Arabidopsis thaliana (Mouse-ear cress).